Reading from the N-terminus, the 249-residue chain is MLNININKIAKDGYIYSKNIRLAKSKIDKQKCYDVREACSIIKEISFAKFNETVDIAIKLGVNPNHSNQVVRGVAAMPSGTGKTVKVAVICQEEKLDEFKTTGADIVGSLDIIEAIKSGNIDYDVYITTPAMMVAVSQVARILGPKGLMPNPKLGTVTNDVADVVKKVKSGQVEFKVDKAGNIHAGIGKISFSIDEIIANINAFVSAIIKSKPSEAKGAYLKGIYLSTTMGPSVRLDISSFTEISNERR.

The protein belongs to the universal ribosomal protein uL1 family. Part of the 50S ribosomal subunit.

Binds directly to 23S rRNA. The L1 stalk is quite mobile in the ribosome, and is involved in E site tRNA release. Its function is as follows. Protein L1 is also a translational repressor protein, it controls the translation of the L11 operon by binding to its mRNA. The polypeptide is Large ribosomal subunit protein uL1 (Orientia tsutsugamushi (strain Ikeda) (Rickettsia tsutsugamushi)).